Here is a 598-residue protein sequence, read N- to C-terminus: Mitogen-activated protein kinase 19 (598 aa).

The Protein kinase domain maps to 25–316; it reads YRILEVIGKG…AAEALADPYF (292 aa). Residues 31-39 and Lys54 each bind ATP; that span reads IGKGSYGVV. Asp151 serves as the catalytic Proton acceptor. Residue Thr187 is modified to Phosphothreonine. The TXY signature appears at 187–189; sequence TDY. Tyr189 is subject to Phosphotyrosine. A Phosphothreonine modification is found at Thr192. A disordered region spans residues 396-486; the sequence is GKSGPVIPPD…VTYENDRNLK (91 aa). The segment covering 414 to 425 has biased composition (low complexity); sequence SAVHSSAVNSNA.

Belongs to the protein kinase superfamily. CMGC Ser/Thr protein kinase family. MAP kinase subfamily. In terms of processing, dually phosphorylated on Thr-187 and Tyr-189, which activates the enzyme.

It carries out the reaction L-seryl-[protein] + ATP = O-phospho-L-seryl-[protein] + ADP + H(+). The catalysed reaction is L-threonyl-[protein] + ATP = O-phospho-L-threonyl-[protein] + ADP + H(+). Its activity is regulated as follows. Activated by threonine and tyrosine phosphorylation. The sequence is that of Mitogen-activated protein kinase 19 (MPK19) from Arabidopsis thaliana (Mouse-ear cress).